The sequence spans 514 residues: Intracellular exo-alpha-L-arabinofuranosidase (514 aa).

The alpha-L-arabinofuranose site is built by Glu-47 and Asn-194. Glu-195 (proton donor/acceptor) is an active-site residue. The alpha-L-arabinofuranose site is built by Tyr-261, Glu-317, and Gln-366. The active-site Nucleophile is Glu-317.

The protein belongs to the glycosyl hydrolase 51 family. As to quaternary structure, homohexamer; trimer of dimers.

The protein resides in the cytoplasm. The catalysed reaction is Hydrolysis of terminal non-reducing alpha-L-arabinofuranoside residues in alpha-L-arabinosides.. The protein operates within glycan metabolism; L-arabinan degradation. In terms of biological role, involved in the degradation of arabinan and is a key enzyme in the complete degradation of the plant cell wall. Catalyzes the cleavage of terminal alpha-L-arabinofuranosyl residues in different hemicellulosic homopolysaccharides (branched and debranched arabinans) and heteropolysaccharides (arabinoxylans). This chain is Intracellular exo-alpha-L-arabinofuranosidase (asdII), found in Bacteroides ovatus.